Reading from the N-terminus, the 330-residue chain is Tryptophan--tRNA ligase (330 aa).

ATP-binding positions include 10-12 and 18-19; these read QAT and GN. The 'HIGH' region signature appears at 11 to 19; it reads ATGSLHLGN. Asp134 contacts L-tryptophan. Residues 146–148, Ile186, and 195–199 contribute to the ATP site; these read GED and KMSKS. The 'KMSKS' region signature appears at 195–199; sequence KMSKS.

It belongs to the class-I aminoacyl-tRNA synthetase family. Homodimer.

It localises to the cytoplasm. It carries out the reaction tRNA(Trp) + L-tryptophan + ATP = L-tryptophyl-tRNA(Trp) + AMP + diphosphate + H(+). Catalyzes the attachment of tryptophan to tRNA(Trp). This Rickettsia conorii (strain ATCC VR-613 / Malish 7) protein is Tryptophan--tRNA ligase.